A 127-amino-acid polypeptide reads, in one-letter code: uncharacterized protein (127 aa).

An N-terminal signal peptide occupies residues 1–23 (MAGVRARAPLPLALLLSLPAAPG). Positions 43 to 127 (CFEVGLRKPP…ACPPRAPLWR (85 aa)) are disordered. Low complexity predominate over residues 59–70 (PPSFSSGSSRPL).

Its subcellular location is the secreted. This is an uncharacterized protein from Homo sapiens (Human).